The chain runs to 455 residues: N-lysine methyltransferase setd6 (455 aa).

In terms of domain architecture, SET spans 38–266; the sequence is PKVYISTEGT…AGQELFNTYG (229 aa).

Belongs to the class V-like SAM-binding methyltransferase superfamily. Histone-lysine methyltransferase family. SETD6 subfamily.

The protein localises to the nucleus. Its function is as follows. Protein-lysine N-methyltransferase. The polypeptide is N-lysine methyltransferase setd6 (setd6) (Xenopus laevis (African clawed frog)).